Here is a 164-residue protein sequence, read N- to C-terminus: UPF0304 protein PC1_2778 (164 aa).

It belongs to the UPF0304 family.

This Pectobacterium carotovorum subsp. carotovorum (strain PC1) protein is UPF0304 protein PC1_2778.